The sequence spans 519 residues: Putative tyrosine carboxypeptidase MATCAP2 (519 aa).

Residues Ser-63–Ala-103 are disordered. Residue His-330 participates in Zn(2+) binding. Glu-331 serves as the catalytic Nucleophile. 2 residues coordinate Zn(2+): His-335 and Glu-366.

Zn(2+) is required as a cofactor.

Putative tyrosine carboxypeptidase. This chain is Putative tyrosine carboxypeptidase MATCAP2, found in Mus musculus (Mouse).